Consider the following 237-residue polypeptide: Uridylate kinase (237 aa).

An ATP-binding site is contributed by 13 to 16; the sequence is KLSG. A UMP-binding site is contributed by Gly-53. The ATP site is built by Gly-54 and Arg-58. UMP contacts are provided by residues Asp-73 and 134–141; that span reads AGLPYFST. ATP-binding residues include Asn-162, Tyr-168, and Asp-171.

The protein belongs to the UMP kinase family. As to quaternary structure, homohexamer.

The protein localises to the cytoplasm. It carries out the reaction UMP + ATP = UDP + ADP. It participates in pyrimidine metabolism; CTP biosynthesis via de novo pathway; UDP from UMP (UMPK route): step 1/1. With respect to regulation, inhibited by UTP. In terms of biological role, catalyzes the reversible phosphorylation of UMP to UDP. The protein is Uridylate kinase of Leifsonia xyli subsp. xyli (strain CTCB07).